A 266-amino-acid chain; its full sequence is Ribosomal RNA small subunit methyltransferase A (266 aa).

Residues histidine 13, leucine 15, glycine 40, glutamate 61, aspartate 85, and asparagine 104 each contribute to the S-adenosyl-L-methionine site.

It belongs to the class I-like SAM-binding methyltransferase superfamily. rRNA adenine N(6)-methyltransferase family. RsmA subfamily.

The protein resides in the cytoplasm. It catalyses the reaction adenosine(1518)/adenosine(1519) in 16S rRNA + 4 S-adenosyl-L-methionine = N(6)-dimethyladenosine(1518)/N(6)-dimethyladenosine(1519) in 16S rRNA + 4 S-adenosyl-L-homocysteine + 4 H(+). In terms of biological role, specifically dimethylates two adjacent adenosines (A1518 and A1519) in the loop of a conserved hairpin near the 3'-end of 16S rRNA in the 30S particle. May play a critical role in biogenesis of 30S subunits. The sequence is that of Ribosomal RNA small subunit methyltransferase A from Parabacteroides distasonis (strain ATCC 8503 / DSM 20701 / CIP 104284 / JCM 5825 / NCTC 11152).